The chain runs to 427 residues: Phosphatase PSR1 (427 aa).

S-palmitoyl cysteine attachment occurs at residues cysteine 9 and cysteine 10. Over residues 14 to 34 the composition is skewed to polar residues; sequence TTQSNSNSAYRQQQSSSLNKN. A disordered region spans residues 14-223; that stretch reads TTQSNSNSAY…SNDADDEDDE (210 aa). Over residues 35–48 the composition is skewed to basic residues; sequence RSVKHSNTKSRTRG. The span at 49 to 80 shows a compositional bias: polar residues; the sequence is VHQTNSPPSKTNSAATFSSTERSTGKSGISTN. Positions 104–118 are enriched in basic and acidic residues; it reads KVEKRISKDDLYEEK. A Phosphoserine modification is found at serine 110. The span at 119–130 shows a compositional bias: acidic residues; sequence YEVDEDEEIDDE. Residues 131 to 151 are compositionally biased toward basic and acidic residues; the sequence is DNRRSRGIVQEKGDAVKDTSR. Residue lysine 154 forms a Glycyl lysine isopeptide (Lys-Gly) (interchain with G-Cter in ubiquitin) linkage. Low complexity predominate over residues 155–183; it reads QQQQQQQQSQPQPQPQSQSQSQSQSQSQQ. The segment covering 184–214 has biased composition (polar residues); the sequence is RGPTVQVSSDHLIQDMNLSRVSSSSQASETS. One can recognise an FCP1 homology domain in the interval 253–411; the sequence is STKGKKCLIL…LDIIPLLEDL (159 aa).

In terms of assembly, interacts with WHI2.

It is found in the cell membrane. Its function is as follows. Has phosphatase activity in vitro. Involved in the response to sodium and lithium ion stress (but not to potassium or sorbitol stress) by inducing transcription of the sodium pump ENA1/PMR2. Acts through a calcineurin-independent pathway and is functionally redundant with PSR2. Also involved in the general stress response; acts together with WHI2 to activate stress response element (STRE)-mediated gene expression, possibly through dephosphorylation of MSN2. This Saccharomyces cerevisiae (strain ATCC 204508 / S288c) (Baker's yeast) protein is Phosphatase PSR1 (PSR1).